A 799-amino-acid chain; its full sequence is Cadherin-8 (799 aa).

The signal sequence occupies residues 1-29 (MPERLAETLMDLWTPLIILWITLPSCVYT). A propeptide spanning residues 30–61 (APMNQAHVLTTGSPLELSRQSEDMRILSRSKR) is cleaved from the precursor. 5 Cadherin domains span residues 62–167 (GWVW…APEF), 168–276 (LNGP…PPKF), 277–391 (AQSL…PPVF), 392–494 (SSPT…DNAP), and 495–616 (EFAS…YVLP). Topologically, residues 62–621 (GWVWNQMFVL…AYVLPIGLSM (560 aa)) are extracellular. An N-linked (GlcNAc...) asparagine glycan is attached at N188. Residues N463, N473, and N544 are each glycosylated (N-linked (GlcNAc...) asparagine). The chain crosses the membrane as a helical span at residues 622–642 (GALIAILACIILLLVIVVLFV). Topologically, residues 643 to 799 (TLRRHKNEPL…YSVGESDKET (157 aa)) are cytoplasmic. The residue at position 795 (S795) is a Phosphoserine.

The protein resides in the cell membrane. In terms of biological role, cadherins are calcium-dependent cell adhesion proteins. They preferentially interact with themselves in a homophilic manner in connecting cells; cadherins may thus contribute to the sorting of heterogeneous cell types. The polypeptide is Cadherin-8 (Cdh8) (Mus musculus (Mouse)).